The following is a 257-amino-acid chain: Glucose-1-phosphate cytidylyltransferase (257 aa).

Substrate contacts are provided by residues 6 to 10 (LAGGL), 11 to 13 (GTR), Lys-23, Ser-104, Arg-109, and Gly-128. 2 residues coordinate Mg(2+): Asp-129 and Asp-234.

This sequence belongs to the glucose-1-phosphate cytidylyltransferase family. In terms of assembly, homohexamer. Requires Mg(2+) as cofactor.

It catalyses the reaction alpha-D-glucose 1-phosphate + CTP + H(+) = CDP-D-glucose + diphosphate. It participates in nucleotide-sugar biosynthesis; CDP-3,6-dideoxy-D-mannose biosynthesis; CDP-3,6-dideoxy-D-mannose from CTP and alpha-D-glucose 1-phosphate: step 1/5. The protein operates within bacterial outer membrane biogenesis; LPS O-antigen biosynthesis. In terms of biological role, involved in the biosynthesis of the tyvelose, a 3,6-dideoxyhexose found in the O-antigen of the surface lipopolysaccharides. It catalyzes the transfer of a CMP moiety from CTP to glucose 1-phosphate. This enzyme can utilize either CTP or UTP as the nucleotide donor. In Salmonella typhi, this protein is Glucose-1-phosphate cytidylyltransferase (rfbF).